The primary structure comprises 119 residues: Acidic phospholipase A2 2 (119 aa).

7 cysteine pairs are disulfide-bonded: Cys-11-Cys-71, Cys-26-Cys-118, Cys-28-Cys-44, Cys-43-Cys-99, Cys-50-Cys-92, Cys-60-Cys-85, and Cys-78-Cys-90. Tyr-27, Gly-29, and Gly-31 together coordinate Ca(2+). His-47 is a catalytic residue. Asp-48 contributes to the Ca(2+) binding site. Asp-93 is an active-site residue.

The protein belongs to the phospholipase A2 family. Group I subfamily. D49 sub-subfamily. Homotrimer. The cofactor is Ca(2+). In terms of tissue distribution, expressed by the venom gland.

It localises to the secreted. The enzyme catalyses a 1,2-diacyl-sn-glycero-3-phosphocholine + H2O = a 1-acyl-sn-glycero-3-phosphocholine + a fatty acid + H(+). Its function is as follows. PLA2 catalyzes the calcium-dependent hydrolysis of the 2-acyl groups in 3-sn-phosphoglycerides. This is Acidic phospholipase A2 2 from Naja naja (Indian cobra).